Here is a 417-residue protein sequence, read N- to C-terminus: NADH-dependent phenylglyoxylate dehydrogenase subunit alpha (417 aa).

As to quaternary structure, dimer of heteropentamers composed of an alpha (PadG), a beta (PadI), a gamma (PadE), a delta (PadF) and an epsilon (PadH) subunit.

The catalysed reaction is phenylglyoxylate + NAD(+) + CoA = benzoyl-CoA + CO2 + NADH. Activated by magnesium ions and thiamine diphosphate. Its function is as follows. Involved in the anaerobic metabolism of phenylalanine and phenylacetate. Catalyzes the oxidative decarboxylation of phenylglyoxylate to benzoyl-CoA and CO(2). It can also react slowly with 2-oxo-3-methylbutanoate and use different electron acceptors such as benzyl viologen, methyl viologen, FAD or FMN, but NAD seems to be the physiological electron acceptor. Also catalyzes an isotope exchange between CO(2) and the carboxyl group which proves partial or complete reversibility of the oxidative decarboxylation reaction. The sequence is that of NADH-dependent phenylglyoxylate dehydrogenase subunit alpha (padG) from Aromatoleum evansii (Azoarcus evansii).